Reading from the N-terminus, the 320-residue chain is Foldase protein PrsA (320 aa).

An N-terminal signal peptide occupies residues 1–20; it reads MKMINKLIVPVTASALLLGA. Cys21 is lipidated: N-palmitoyl cysteine. Cys21 is lipidated: S-diacylglycerol cysteine. Residues 139 to 245 form the PpiC domain; that stretch reads EDSKKASHIL…FGYHIIKADK (107 aa). Positions 159–198 are disordered; that stretch reads EGLDDKEAKQKAEEIQKEVSKDPSKFGEIAKKESMDTGSA.

This sequence belongs to the PrsA family.

The protein localises to the cell membrane. The enzyme catalyses [protein]-peptidylproline (omega=180) = [protein]-peptidylproline (omega=0). Plays a major role in protein secretion by helping the post-translocational extracellular folding of several secreted proteins. This chain is Foldase protein PrsA, found in Staphylococcus aureus (strain Mu3 / ATCC 700698).